Here is a 350-residue protein sequence, read N- to C-terminus: Nicotinate-nucleotide--dimethylbenzimidazole phosphoribosyltransferase (350 aa).

Glu-316 acts as the Proton acceptor in catalysis.

This sequence belongs to the CobT family.

It catalyses the reaction 5,6-dimethylbenzimidazole + nicotinate beta-D-ribonucleotide = alpha-ribazole 5'-phosphate + nicotinate + H(+). Its pathway is nucleoside biosynthesis; alpha-ribazole biosynthesis; alpha-ribazole from 5,6-dimethylbenzimidazole: step 1/2. Its function is as follows. Catalyzes the synthesis of alpha-ribazole-5'-phosphate from nicotinate mononucleotide (NAMN) and 5,6-dimethylbenzimidazole (DMB). This is Nicotinate-nucleotide--dimethylbenzimidazole phosphoribosyltransferase from Pseudomonas syringae pv. syringae (strain B728a).